Here is a 324-residue protein sequence, read N- to C-terminus: MTSVDCTAYGPELRALAARLPRTPRADLYAFLDAAHTAAASLPGALATALDTFNAEGSEDGHLLLRGLPVEADADLPTTPSSTPAPEDRSLLTMEAMLGLVGRRLGLHTGYRELRSGTVYHDVYPSPGAHHLSSETSETLLEFHTEMAYHRLQPNYVMLACSRADHERTAATLVASVRKALPLLDERTRARLLDRRMPCCVDVAFRGGVDDPGAIAQVKPLYGDADDPFLGYDRELLAPEDPADKEAVAALSKALDEVTEAVYLEPGDLLIVDNFRTTHARTPFSPRWDGKDRWLHRVYIRTDRNGQLSGGERAGDVVAFTPRG.

Positions 144, 146, and 279 each coordinate Fe cation. Arginine 293 contacts 2-oxoglutarate.

This sequence belongs to the clavaminate synthase family. It depends on Fe(2+) as a cofactor.

It carries out the reaction deoxyamidinoproclavaminate + 2-oxoglutarate + O2 = amidinoproclavaminate + succinate + CO2. The catalysed reaction is proclavaminate + 2-oxoglutarate + O2 = dihydroclavaminate + succinate + CO2 + H2O. The enzyme catalyses dihydroclavaminate + 2-oxoglutarate + O2 = clavaminate + succinate + CO2 + H2O. The protein operates within antibiotic biosynthesis; clavulanate biosynthesis; clavulanate from D-glyceraldehyde 3-phosphate and L-arginine: step 3/8. It participates in antibiotic biosynthesis; clavulanate biosynthesis; clavulanate from D-glyceraldehyde 3-phosphate and L-arginine: step 5/8. It functions in the pathway antibiotic biosynthesis; clavulanate biosynthesis; clavulanate from D-glyceraldehyde 3-phosphate and L-arginine: step 6/8. The sequence is that of Clavaminate synthase 1 (cs1) from Streptomyces clavuligerus.